We begin with the raw amino-acid sequence, 1453 residues long: NRPS-like tryptophan epimerase fscC (1453 aa).

The interval 37–433 (SYGELSAMSS…ATHLIRNCVV (397 aa)) is adenylation. The Carrier domain maps to 544–626 (TGSRQSTRHK…LFHTSKSRFT (83 aa)). S586 carries the O-(pantetheine 4'-phosphoryl)serine modification. The segment at 639–1053 (FPLSPVQRFF…KDVLESAGVF (415 aa)) is epimerization (E) domain. The interval 1181 to 1391 (FFGLQSNERA…AGSSLHQHNQ (211 aa)) is condensation.

The protein belongs to the NRP synthetase family. It depends on pantetheine 4'-phosphate as a cofactor.

Its pathway is secondary metabolite biosynthesis. Functionally, NRPS-like tryptophan epimerase; part of the fragmented gene cluster that mediates the biosynthesis of fusarochromene, a tryptophan-derived metabolite closely related to a group of mycotoxins including fusarochromanone. Within the pathway, fscC catalyzes the first step via epimerization of L-tryptophan to provide the intermediate D-tryptophan. D-tryptophan is subsequently hydroxylated by the tryptophan 6-hydroxylase fscE to yield 6-hydroxytryptophan. The pyrrole ring undergoes cleavaged by the tryptophan 2,3-dioxygenase fscD and is finally converted to 4-hydroxykyrunenine by the hydrolase fscH. The NRPS-like oxidoreductase fscA reduces the carboxyl group to primary alcohol and the DMATS-type prenyltransferase fscG performs prenylation, followed by the formation of a chromene ring catalyzed by the oxidoreductase fscI, which leads to desacetylfusarochromene. Epoxidation by fscF and rearrangement reactions of chromene double bonds convert compound desacetylfusarochromene to fusarochromanones. Although specific acetyltransferases were not found near the fsc gene cluster, several predicted enzymes containing the N-acetyltransferase superfamily domain are present in the genome of F.equiseti. These predicted enzymes may have the potential to convert desacetylfusarochromene to fusarochromene. This chain is NRPS-like tryptophan epimerase fscC, found in Fusarium equiseti (Fusarium scirpi).